The sequence spans 229 residues: Molybdenum transport system permease protein ModB (229 aa).

Residues 6–214 (INLSLSVAVS…LISLLLSEWL (209 aa)) form the ABC transmembrane type-1 domain. 5 consecutive transmembrane segments (helical) span residues 12-32 (VAVSSMLWSLPLAIFVAWLLA), 45-65 (VIHLPLVLPPVVIGYLLLVAM), 83-103 (FGFSWKGAVLSSAVVAFPLVV), 132-152 (FFTITLPLSLPGVLAGLVLGF), and 196-216 (LCLFAIILSLISLLLSEWLSK).

This sequence belongs to the binding-protein-dependent transport system permease family. CysTW subfamily.

It is found in the cell inner membrane. Part of the binding-protein-dependent transport system for molybdenum; probably responsible for the translocation of the substrate across the membrane. The polypeptide is Molybdenum transport system permease protein ModB (modB) (Haemophilus influenzae (strain ATCC 51907 / DSM 11121 / KW20 / Rd)).